We begin with the raw amino-acid sequence, 60 residues long: Large ribosomal subunit protein bL32 (60 aa).

The segment at Met-1–Ser-28 is disordered. Over residues Lys-7–Arg-16 the composition is skewed to basic residues.

The protein belongs to the bacterial ribosomal protein bL32 family.

The protein is Large ribosomal subunit protein bL32 of Cellvibrio japonicus (strain Ueda107) (Pseudomonas fluorescens subsp. cellulosa).